Reading from the N-terminus, the 165-residue chain is Anaerobic nitrite reductase GLB1 (165 aa).

Residues 12 to 162 (VFGEEQEALV…LVAAIKREMK (151 aa)) enclose the Globin domain. Positions 45–49 (EIAPS) match the Homodimerization motif. Residues Ser-55, Lys-69, His-73, Arg-103, Thr-107, and His-108 each coordinate heme b. The Homodimerization motif lies at 115 to 127 (DGHFEVTGFALLE).

The protein belongs to the plant globin family. As to quaternary structure, homodimer. Heme b is required as a cofactor. As to expression, in vegetative but not in embryonic organs.

The protein localises to the cytoplasm. Its subcellular location is the nucleus. It carries out the reaction Fe(III)-heme b-[protein] + nitric oxide + H2O = Fe(II)-heme b-[protein] + nitrite + 2 H(+). Its function is as follows. Phytoglobin that reduces nitrite to nitric oxide (NO) under anoxic conditions (e.g. during flooding or in waterlogged soil). May not function as an oxygen storage or transport protein. Has an unusually high affinity for O(2) through an hexacoordinate heme iron because of a very low dissociation constant. In Zea mays subsp. parviglumis (Balsas teosinte), this protein is Anaerobic nitrite reductase GLB1 (HB).